We begin with the raw amino-acid sequence, 470 residues long: Neuraminidase (470 aa).

The Intravirion segment spans residues 1–14; sequence MNPNQKIITIGSIS. Residues 11–32 form an involved in apical transport and lipid raft association region; sequence GSISLGLVVFNVLLHVVSIIVT. Residues 15 to 35 form a helical membrane-spanning segment; that stretch reads LGLVVFNVLLHVVSIIVTVLI. Residues 32-86 are hypervariable stalk region; that stretch reads TVLILGKGENNGICNGTVVREYNETVRIERVTQWHNTNVVEYVPYWNGGTYMNNT. Residues 36–470 lie on the Virion surface side of the membrane; sequence LGKGENNGIC…AILPFDIDKM (435 aa). N-linked (GlcNAc...) asparagine; by host glycans are attached at residues Asn46, Asn54, and Asn84. The segment at 89 to 470 is head of neuraminidase; sequence ICDVKGFAPF…AILPFDIDKM (382 aa). Disulfide bonds link Cys90–Cys417, Cys122–Cys127, Cys182–Cys229, Cys231–Cys236, Cys277–Cys290, Cys279–Cys288, Cys316–Cys335, and Cys421–Cys446. Arg116 provides a ligand contact to substrate. Asn144 carries N-linked (GlcNAc...) asparagine; by host glycosylation. The active-site Proton donor/acceptor is the Asp149. A substrate-binding site is contributed by Arg150. 275–276 is a substrate binding site; sequence EE. Arg291 contacts substrate. Asp292 provides a ligand contact to Ca(2+). An N-linked (GlcNAc...) asparagine; by host glycan is attached at Asn293. Positions 296 and 322 each coordinate Ca(2+). Arg368 is a binding site for substrate. Asn398 carries an N-linked (GlcNAc...) asparagine; by host glycan. Tyr402 functions as the Nucleophile in the catalytic mechanism.

The protein belongs to the glycosyl hydrolase 34 family. As to quaternary structure, homotetramer. It depends on Ca(2+) as a cofactor. In terms of processing, N-glycosylated.

It localises to the virion membrane. The protein localises to the host apical cell membrane. It catalyses the reaction Hydrolysis of alpha-(2-&gt;3)-, alpha-(2-&gt;6)-, alpha-(2-&gt;8)- glycosidic linkages of terminal sialic acid residues in oligosaccharides, glycoproteins, glycolipids, colominic acid and synthetic substrates.. Its activity is regulated as follows. Inhibited by the neuraminidase inhibitors zanamivir (Relenza) and oseltamivir (Tamiflu). These drugs interfere with the release of progeny virus from infected cells and are effective against all influenza strains. Resistance to neuraminidase inhibitors is quite rare. In terms of biological role, catalyzes the removal of terminal sialic acid residues from viral and cellular glycoconjugates. Cleaves off the terminal sialic acids on the glycosylated HA during virus budding to facilitate virus release. Additionally helps virus spread through the circulation by further removing sialic acids from the cell surface. These cleavages prevent self-aggregation and ensure the efficient spread of the progeny virus from cell to cell. Otherwise, infection would be limited to one round of replication. Described as a receptor-destroying enzyme because it cleaves a terminal sialic acid from the cellular receptors. May facilitate viral invasion of the upper airways by cleaving the sialic acid moieties on the mucin of the airway epithelial cells. Likely to plays a role in the budding process through its association with lipid rafts during intracellular transport. May additionally display a raft-association independent effect on budding. Plays a role in the determination of host range restriction on replication and virulence. Sialidase activity in late endosome/lysosome traffic seems to enhance virus replication. This chain is Neuraminidase, found in Influenza A virus (strain A/Turkey/Ireland/1378/1983 H5N8).